A 443-amino-acid polypeptide reads, in one-letter code: MSEMTPREIVSELDSHIIGQDKAKRAVAIALRNRWRRMQLNEELRHEVTPKNILMIGPTGVGKTEIARRLAKLANAPFIKVEATKFTEVGYVGKEVDSIIRDLTDAAVKMVRHQSIEKMRYRAEELAEERILDVLIPPAKNNWGVPDESQEPSATRQTFRKKLREGQLDDKEIEIDLAAAPMGVEIMAPPGMEEMTNQLQSMFQNIAGQKQKPRKIKIKEALKLLIEEEAAKLVNPEELKQQAIDAVEQHGIVFIDEIDKICKRGQTSGPDVSREGVQRDLLPLVEGCTVSTKHGMVKTDHILFIASGAFQVSSPSDLIPELQGRLPIRVELQALTTDDFERILTEPSASLTEQYKALMATEGVTIEFTREGIRKIAEAAWQVNERTENIGARRLHTVLERLMEDISYDASESSGQSITIDAEYVGKHLDELVADEDLSRFIL.

ATP contacts are provided by residues Ile-18, 60-65 (GVGKTE), Asp-256, Glu-321, and Arg-393.

This sequence belongs to the ClpX chaperone family. HslU subfamily. A double ring-shaped homohexamer of HslV is capped on each side by a ring-shaped HslU homohexamer. The assembly of the HslU/HslV complex is dependent on binding of ATP.

It localises to the cytoplasm. Functionally, ATPase subunit of a proteasome-like degradation complex; this subunit has chaperone activity. The binding of ATP and its subsequent hydrolysis by HslU are essential for unfolding of protein substrates subsequently hydrolyzed by HslV. HslU recognizes the N-terminal part of its protein substrates and unfolds these before they are guided to HslV for hydrolysis. This chain is ATP-dependent protease ATPase subunit HslU, found in Yersinia pestis bv. Antiqua (strain Antiqua).